Consider the following 155-residue polypeptide: Troponin C, body wall muscle (155 aa).

At Val-1 the chain carries N-acetylvaline. 4 consecutive EF-hand domains span residues 7 to 43 (DEKSQFRAAFDIFVADAKDGTISSKELGKVMKMLGQN), 44 to 79 (PTEKDLQEMIEEVDIDGSGTIDFEEFCLMMYRQMQA), 88 to 121 (REEKELSEAFRLFDLDGDGIGDELKAALDGTGEN), and 122 to 155 (VETWEVDEMMADGDKNHDSQIDYEEWVTMMKFVQ). Ca(2+)-binding residues include Asp-57, Asp-59, Ser-61, Thr-63, and Glu-68. 5 residues coordinate Ca(2+): Asp-135, Asn-137, Asp-139, Gln-141, and Glu-146.

Belongs to the troponin C family.

Troponin is the central regulatory protein of muscle contraction. Tn consists of three components: Tn-I which is the inhibitor of actomyosin ATPase, Tn-T which contains the binding site for tropomyosin and Tn-C. The binding of calcium to Tn-C abolishes the inhibitory action of Tn on actin filaments. This Halocynthia roretzi (Sea squirt) protein is Troponin C, body wall muscle.